A 659-amino-acid polypeptide reads, in one-letter code: DNA mismatch repair protein MutL (659 aa).

Residues 338–459 are disordered; sequence GAPRGASKPG…DTTSERDSLP (122 aa). The segment covering 352-362 has biased composition (basic and acidic residues); sequence SPEHSPTDRDA. A compositionally biased stretch (polar residues) spans 374-391; it reads SDGNGQRTAASGATSESP.

Belongs to the DNA mismatch repair MutL/HexB family.

In terms of biological role, this protein is involved in the repair of mismatches in DNA. It is required for dam-dependent methyl-directed DNA mismatch repair. May act as a 'molecular matchmaker', a protein that promotes the formation of a stable complex between two or more DNA-binding proteins in an ATP-dependent manner without itself being part of a final effector complex. This Halobacterium salinarum (strain ATCC 29341 / DSM 671 / R1) protein is DNA mismatch repair protein MutL.